Here is a 429-residue protein sequence, read N- to C-terminus: Probable M18 family aminopeptidase 2 (429 aa).

Residues histidine 82, histidine 156, and histidine 401 each contribute to the Zn(2+) site.

This sequence belongs to the peptidase M18 family. Zn(2+) serves as cofactor.

The polypeptide is Probable M18 family aminopeptidase 2 (Pseudomonas putida (strain ATCC 700007 / DSM 6899 / JCM 31910 / BCRC 17059 / LMG 24140 / F1)).